Here is a 103-residue protein sequence, read N- to C-terminus: Cell division topological specificity factor (103 aa).

It belongs to the MinE family.

In terms of biological role, prevents the cell division inhibition by proteins MinC and MinD at internal division sites while permitting inhibition at polar sites. This ensures cell division at the proper site by restricting the formation of a division septum at the midpoint of the long axis of the cell. The chain is Cell division topological specificity factor from Prochlorococcus marinus (strain MIT 9211).